We begin with the raw amino-acid sequence, 296 residues long: Alpha/beta-gliadin clone PW1215 (296 aa).

The N-terminal stretch at 1–20 (MKTFLILALLAIVATTATTA) is a signal peptide. 2 disordered regions span residues 24-126 (PVPQ…QAQQ) and 220-255 (SSQV…VQPQ). Positions 25 to 36 (VPQPQPQNPSQP) are enriched in pro residues. Residues 37–58 (QPQGQVPLVQQQQFPGQQQQFP) are compositionally biased toward low complexity. Pro residues-rich tracts occupy residues 59–71 (PQQP…PFPS) and 81–116 (FPQP…PQPQ). Low complexity-rich tracts occupy residues 117-126 (QPISQQQAQQ) and 220-241 (SSQV…FFQP). Residues 242-255 (SQQNPQAQGSVQPQ) are compositionally biased toward polar residues.

Belongs to the gliadin/glutenin family. In terms of processing, substrate of transglutaminase.

Its function is as follows. Gliadin is the major seed storage protein in wheat. This chain is Alpha/beta-gliadin clone PW1215, found in Triticum aestivum (Wheat).